Reading from the N-terminus, the 353-residue chain is Photosystem II protein D1 (353 aa).

The residue at position 2 (T2) is an N-acetylthreonine. T2 carries the post-translational modification Phosphothreonine. 3 helical membrane-spanning segments follow: residues 29-46, 118-133, and 142-156; these read YIGW…TATS, HFLL…EWEL, and WIAV…AATA. Chlorophyll a is bound at residue H118. Residue Y126 coordinates pheophytin a. The [CaMn4O5] cluster site is built by D170 and E189. A helical membrane pass occupies residues 197-218; sequence FHMLGVAGVFGGSLFSAMHGSL. H198 contacts chlorophyll a. Residues H215 and 264–265 contribute to the a quinone site; that span reads SF. H215 contributes to the Fe cation binding site. Residue H272 participates in Fe cation binding. The chain crosses the membrane as a helical span at residues 274–288; the sequence is FLAAWPVVGIWFTAL. H332, E333, D342, and A344 together coordinate [CaMn4O5] cluster. The propeptide occupies 345–353; it reads AVEAPSING.

It belongs to the reaction center PufL/M/PsbA/D family. As to quaternary structure, PSII is composed of 1 copy each of membrane proteins PsbA, PsbB, PsbC, PsbD, PsbE, PsbF, PsbH, PsbI, PsbJ, PsbK, PsbL, PsbM, PsbT, PsbX, PsbY, PsbZ, Psb30/Ycf12, at least 3 peripheral proteins of the oxygen-evolving complex and a large number of cofactors. It forms dimeric complexes. The D1/D2 heterodimer binds P680, chlorophylls that are the primary electron donor of PSII, and subsequent electron acceptors. It shares a non-heme iron and each subunit binds pheophytin, quinone, additional chlorophylls, carotenoids and lipids. D1 provides most of the ligands for the Mn4-Ca-O5 cluster of the oxygen-evolving complex (OEC). There is also a Cl(-1) ion associated with D1 and D2, which is required for oxygen evolution. The PSII complex binds additional chlorophylls, carotenoids and specific lipids. serves as cofactor. Tyr-161 forms a radical intermediate that is referred to as redox-active TyrZ, YZ or Y-Z. Post-translationally, C-terminally processed by CTPA; processing is essential to allow assembly of the oxygen-evolving complex and thus photosynthetic growth.

Its subcellular location is the plastid. It localises to the chloroplast thylakoid membrane. The enzyme catalyses 2 a plastoquinone + 4 hnu + 2 H2O = 2 a plastoquinol + O2. Its function is as follows. This is one of the two reaction center proteins of photosystem II. Photosystem II (PSII) is a light-driven water:plastoquinone oxidoreductase that uses light energy to abstract electrons from H(2)O, generating O(2) and a proton gradient subsequently used for ATP formation. It consists of a core antenna complex that captures photons, and an electron transfer chain that converts photonic excitation into a charge separation. The D1/D2 (PsbA/PsbD) reaction center heterodimer binds P680, the primary electron donor of PSII as well as several subsequent electron acceptors. This Pisum sativum (Garden pea) protein is Photosystem II protein D1.